A 193-amino-acid polypeptide reads, in one-letter code: Holliday junction branch migration complex subunit RuvA (193 aa).

The tract at residues 1–64 is domain I; it reads MIGRIQGTLV…EDAQQLFGFA (64 aa). The tract at residues 65–139 is domain II; the sequence is TETEREAFRQ…GKLAPDLGVA (75 aa). The tract at residues 139-143 is flexible linker; sequence AGGKP. The interval 144–193 is domain III; the sequence is QAIETSSEVLQALLALGYSEKEALLALKQIPADTSISDGIRMGLKYLSKA.

The protein belongs to the RuvA family. In terms of assembly, homotetramer. Forms an RuvA(8)-RuvB(12)-Holliday junction (HJ) complex. HJ DNA is sandwiched between 2 RuvA tetramers; dsDNA enters through RuvA and exits via RuvB. An RuvB hexamer assembles on each DNA strand where it exits the tetramer. Each RuvB hexamer is contacted by two RuvA subunits (via domain III) on 2 adjacent RuvB subunits; this complex drives branch migration. In the full resolvosome a probable DNA-RuvA(4)-RuvB(12)-RuvC(2) complex forms which resolves the HJ.

The protein resides in the cytoplasm. The RuvA-RuvB-RuvC complex processes Holliday junction (HJ) DNA during genetic recombination and DNA repair, while the RuvA-RuvB complex plays an important role in the rescue of blocked DNA replication forks via replication fork reversal (RFR). RuvA specifically binds to HJ cruciform DNA, conferring on it an open structure. The RuvB hexamer acts as an ATP-dependent pump, pulling dsDNA into and through the RuvAB complex. HJ branch migration allows RuvC to scan DNA until it finds its consensus sequence, where it cleaves and resolves the cruciform DNA. The sequence is that of Holliday junction branch migration complex subunit RuvA from Polynucleobacter necessarius subsp. necessarius (strain STIR1).